The following is a 341-amino-acid chain: UDP-N-acetylenolpyruvoylglucosamine reductase (341 aa).

The region spanning 15–185 (VEQSCLSLIE…TAVGLRLPKA (171 aa)) is the FAD-binding PCMH-type domain. Arg-161 is a catalytic residue. Ser-231 serves as the catalytic Proton donor. The active site involves Glu-327.

Belongs to the MurB family. The cofactor is FAD.

The protein resides in the cytoplasm. The enzyme catalyses UDP-N-acetyl-alpha-D-muramate + NADP(+) = UDP-N-acetyl-3-O-(1-carboxyvinyl)-alpha-D-glucosamine + NADPH + H(+). Its pathway is cell wall biogenesis; peptidoglycan biosynthesis. Functionally, cell wall formation. This is UDP-N-acetylenolpyruvoylglucosamine reductase from Shewanella sp. (strain ANA-3).